We begin with the raw amino-acid sequence, 107 residues long: Quaternary ammonium compound-resistance protein QacC (107 aa).

The next 3 membrane-spanning stretches (helical) occupy residues 26–46, 57–77, and 84–104; these read FSKF…FYFL, ITYA…SIII, and LITI…NIFG.

The protein belongs to the drug/metabolite transporter (DMT) superfamily. Small multidrug resistance (SMR) (TC 2.A.7.1) family.

Its subcellular location is the cell membrane. Its function is as follows. Multidrug exporter. Is implicated for the resistance to bacteriocidal quaternary ammonium compounds. The polypeptide is Quaternary ammonium compound-resistance protein QacC (Staphylococcus sp. (strain ST827)).